The following is a 161-amino-acid chain: Regulator of ribonuclease activity A (161 aa).

It belongs to the RraA family. In terms of assembly, homotrimer. Binds to both RNA-binding sites in the C-terminal region of Rne and to RhlB.

It is found in the cytoplasm. In terms of biological role, globally modulates RNA abundance by binding to RNase E (Rne) and regulating its endonucleolytic activity. Can modulate Rne action in a substrate-dependent manner by altering the composition of the degradosome. Modulates RNA-binding and helicase activities of the degradosome. The sequence is that of Regulator of ribonuclease activity A from Pseudoalteromonas atlantica (strain T6c / ATCC BAA-1087).